Consider the following 147-residue polypeptide: Peptidyl-lysine N-acetyltransferase YjaB (147 aa).

The N-acetyltransferase domain occupies 3–144; the sequence is ISIRRSRHEE…KPYPLLNLAY (142 aa).

The protein belongs to the acetyltransferase family.

It carries out the reaction L-lysyl-[protein] + acetyl-CoA = N(6)-acetyl-L-lysyl-[protein] + CoA + H(+). Its function is as follows. N-epsilon-lysine acetyltransferase that catalyzes acetylation of a large number of proteins. Binds acetyl-CoA. This Escherichia coli (strain K12) protein is Peptidyl-lysine N-acetyltransferase YjaB (yjaB).